Consider the following 975-residue polypeptide: Glycine dehydrogenase (decarboxylating) (975 aa).

An N6-(pyridoxal phosphate)lysine modification is found at Lys723.

This sequence belongs to the GcvP family. In terms of assembly, the glycine cleavage system is composed of four proteins: P, T, L and H. It depends on pyridoxal 5'-phosphate as a cofactor.

It catalyses the reaction N(6)-[(R)-lipoyl]-L-lysyl-[glycine-cleavage complex H protein] + glycine + H(+) = N(6)-[(R)-S(8)-aminomethyldihydrolipoyl]-L-lysyl-[glycine-cleavage complex H protein] + CO2. Its function is as follows. The glycine cleavage system catalyzes the degradation of glycine. The P protein binds the alpha-amino group of glycine through its pyridoxal phosphate cofactor; CO(2) is released and the remaining methylamine moiety is then transferred to the lipoamide cofactor of the H protein. The chain is Glycine dehydrogenase (decarboxylating) from Burkholderia cenocepacia (strain HI2424).